Reading from the N-terminus, the 344-residue chain is Heat-inducible transcription repressor HrcA (344 aa).

The protein belongs to the HrcA family.

Functionally, negative regulator of class I heat shock genes (grpE-dnaK-dnaJ and groELS operons). Prevents heat-shock induction of these operons. This is Heat-inducible transcription repressor HrcA from Streptococcus pneumoniae (strain Taiwan19F-14).